We begin with the raw amino-acid sequence, 177 residues long: Adenine phosphoribosyltransferase (177 aa).

It belongs to the purine/pyrimidine phosphoribosyltransferase family. In terms of assembly, homodimer.

It is found in the cytoplasm. It catalyses the reaction AMP + diphosphate = 5-phospho-alpha-D-ribose 1-diphosphate + adenine. Its pathway is purine metabolism; AMP biosynthesis via salvage pathway; AMP from adenine: step 1/1. In terms of biological role, catalyzes a salvage reaction resulting in the formation of AMP, that is energically less costly than de novo synthesis. In Cutibacterium acnes (strain DSM 16379 / KPA171202) (Propionibacterium acnes), this protein is Adenine phosphoribosyltransferase.